The following is a 691-amino-acid chain: Proprotein convertase subtilisin/kexin type 9 (691 aa).

The first 30 residues, 1 to 30 (MGIRCSTWLRWPLSPQLLLLLLLCPTGSRA), serve as a signal peptide directing secretion. Positions 31-151 (QDEDGDYEEL…IEEDSLVFAQ (121 aa)) are excised as a propeptide. A Sulfotyrosine modification is found at Tyr-37. The residue at position 46 (Ser-46) is a Phosphoserine. The Peptidase S8 domain occupies 154 to 441 (PWNLERIIPA…QRVLTPNRVA (288 aa)). Catalysis depends on charge relay system residues Asp-185 and His-225. Cystine bridges form between Cys-222–Cys-254 and Cys-322–Cys-357. Ser-385 (charge relay system) is an active-site residue. The tract at residues 449–691 (ETGGQLLCRT…PSAKASWVHQ (243 aa)) is C-terminal domain. Disulfide bonds link Cys-456/Cys-526, Cys-476/Cys-525, and Cys-485/Cys-508. Positions 495 to 497 (RGD) match the Cell attachment site motif. N-linked (GlcNAc...) asparagine glycosylation occurs at Asn-532. 6 disulfides stabilise this stretch: Cys-533/Cys-600, Cys-551/Cys-599, Cys-561/Cys-587, Cys-607/Cys-678, Cys-625/Cys-677, and Cys-634/Cys-653. At Ser-687 the chain carries Phosphoserine.

Belongs to the peptidase S8 family. Monomer. Can self-associate to form dimers and higher multimers which may have increased LDLR degrading activity. The precursor protein but not the mature protein may form multimers. Interacts with APOB, VLDLR, LRP8/APOER2 and BACE1. The full-length immature form (pro-PCSK9) interacts with SCNN1A, SCNN1B and SCNN1G. The pro-PCSK9 form (via C-terminal domain) interacts with LDLR. Interacts (via the C-terminal domain) with ANXA2 (via repeat Annexin 1); the interaction inhibits the degradation of LDLR. Ca(2+) is required as a cofactor. Cleavage by furin and PCSK5 generates a truncated inactive protein that is unable to induce LDLR degradation. Post-translationally, undergoes autocatalytic cleavage in the endoplasmic reticulum to release the propeptide from the N-terminus and the cleavage of the propeptide is strictly required for its maturation and activation. The cleaved propeptide however remains associated with the catalytic domain through non-covalent interactions, preventing potential substrates from accessing its active site. As a result, it is secreted from cells as a propeptide-containing, enzymatically inactive protein. In terms of processing, phosphorylation protects the propeptide against proteolysis. In terms of tissue distribution, highly expressed in 12-day embryo. In the adult, strongly expressed in liver, small intestine, jejunum, and to a lesser extent in kidney, lung, spleen and thymus. Expression in the liver is up-regulated following partial hepatectomy.

Its subcellular location is the cytoplasm. It is found in the secreted. It localises to the endosome. The protein localises to the lysosome. The protein resides in the cell surface. Its subcellular location is the endoplasmic reticulum. It is found in the golgi apparatus. Its proteolytic activity is autoinhibited by the non-covalent binding of the propeptide to the catalytic domain. Inhibited by EGTA. In terms of biological role, crucial player in the regulation of plasma cholesterol homeostasis. Binds to low-density lipid receptor family members: low density lipoprotein receptor (LDLR), very low density lipoprotein receptor (VLDLR), apolipoprotein E receptor (LRP1/APOER) and apolipoprotein receptor 2 (LRP8/APOER2), and promotes their degradation in intracellular acidic compartments. Acts via a non-proteolytic mechanism to enhance the degradation of the hepatic LDLR through a clathrin LDLRAP1/ARH-mediated pathway. May prevent the recycling of LDLR from endosomes to the cell surface or direct it to lysosomes for degradation. Can induce ubiquitination of LDLR leading to its subsequent degradation. Inhibits intracellular degradation of APOB via the autophagosome/lysosome pathway in a LDLR-independent manner. Involved in the disposal of non-acetylated intermediates of BACE1 in the early secretory pathway. Inhibits epithelial Na(+) channel (ENaC)-mediated Na(+) absorption by reducing ENaC surface expression primarily by increasing its proteasomal degradation. Regulates neuronal apoptosis via modulation of LRP8/APOER2 levels and related anti-apoptotic signaling pathways. This chain is Proprotein convertase subtilisin/kexin type 9 (Pcsk9), found in Rattus norvegicus (Rat).